The chain runs to 26 residues: Acyl carrier protein (26 aa).

A Carrier domain is found at 2 to 26 (SDIEQRIKQAVAEQLGMRAEEIKNE).

Belongs to the acyl carrier protein (ACP) family. Post-translationally, 4'-phosphopantetheine is transferred from CoA to a specific serine of apo-ACP by AcpS. This modification is essential for activity because fatty acids are bound in thioester linkage to the sulfhydryl of the prosthetic group.

The protein resides in the cytoplasm. It functions in the pathway lipid metabolism; fatty acid biosynthesis. Carrier of the growing fatty acid chain in fatty acid biosynthesis. This Acinetobacter calcoaceticus protein is Acyl carrier protein (acpP).